The sequence spans 156 residues: MGRFIFVRVGLLVVFLSLSGTGADFDCPPDWSAYDQHCYKAFDEPKRSGDAEKFCTQQANGGHLVSIESVEEAEFVAQLISENIKTSADYVWIGLWNQRKAPYCVSKWTDGSSVIYKNVIERFIKNCFGLEKETNYRTWFNLSCGDDYPFVCKSPA.

Residues 1-23 (MGRFIFVRVGLLVVFLSLSGTGA) form the signal peptide. 3 disulfide bridges follow: Cys27–Cys38, Cys55–Cys152, and Cys127–Cys144. Residues 34–153 (YDQHCYKAFD…CGDDYPFVCK (120 aa)) enclose the C-type lectin domain. The N-linked (GlcNAc...) asparagine glycan is linked to Asn141.

This sequence belongs to the snaclec family. In terms of assembly, heterodimer; disulfide-linked. As to expression, expressed by the venom gland.

The protein resides in the secreted. Its function is as follows. Interferes with one step of hemostasis (modulation of platelet aggregation, or coagulation cascade, for example). In Macrovipera lebetinus (Levantine viper), this protein is Snaclec A14.